The chain runs to 500 residues: Autophagy-related protein 18 (500 aa).

The WD 1 repeat unit spans residues aspartate 3–serine 41. The segment at valine 174 to leucine 197 is disordered. Over residues serine 181–isoleucine 194 the composition is skewed to basic and acidic residues. WD repeat units lie at residues alanine 243–glutamine 283 and threonine 288–lysine 327. The short motif at phenylalanine 284–threonine 288 is the L/FRRG motif element. Residues leucine 328–asparagine 358 form a disordered region. Residues aspartate 331 to serine 344 show a composition bias toward acidic residues. Serine 354 carries the phosphoserine modification.

The protein belongs to the WD repeat PROPPIN family. As to quaternary structure, component of the PI(3,5)P2 regulatory complex, composed of ATG18, FIG4, FAB1, VAC14 and VAC7. VAC14 nucleates the assembly of the complex and serves as a scaffold. Interacts with ATG2, ATG9 and VAC17. The ATG2-ATG18 complex is essential for autophagosome formation.

Its subcellular location is the preautophagosomal structure membrane. The protein resides in the vacuole membrane. The protein localises to the endosome membrane. Its function is as follows. The PI(3,5)P2 regulatory complex regulates both the synthesis and turnover of phosphatidylinositol 3,5-bisphosphate (PtdIns(3,5)P2). May negatively regulate FAB1 activity by sequestering or masking VAC7 from FAB1. Necessary for proper vacuole morphology. Plays an important role in osmotically-induced vacuole fragmentation. Required for cytoplasm to vacuole transport (Cvt) vesicle formation, pexophagy and starvation-induced autophagy. Involved in correct ATG9 trafficking to the pre-autophagosomal structure. Might also be involved in premeiotic DNA replication. With ATG2, protects ATG8 from ARG4-mediated cleavage. The protein is Autophagy-related protein 18 (ATG18) of Saccharomyces cerevisiae (strain YJM789) (Baker's yeast).